We begin with the raw amino-acid sequence, 391 residues long: 8-amino-7-oxononanoate synthase (391 aa).

Position 24 (Arg24) interacts with substrate. Residue 112-113 (GY) participates in pyridoxal 5'-phosphate binding. His137 is a substrate binding site. Ser183, His211, and Thr240 together coordinate pyridoxal 5'-phosphate. Lys243 bears the N6-(pyridoxal phosphate)lysine mark. Thr357 is a substrate binding site.

This sequence belongs to the class-II pyridoxal-phosphate-dependent aminotransferase family. BioF subfamily. In terms of assembly, homodimer. Pyridoxal 5'-phosphate serves as cofactor.

It carries out the reaction 6-carboxyhexanoyl-[ACP] + L-alanine + H(+) = (8S)-8-amino-7-oxononanoate + holo-[ACP] + CO2. It functions in the pathway cofactor biosynthesis; biotin biosynthesis. Its function is as follows. Catalyzes the decarboxylative condensation of pimeloyl-[acyl-carrier protein] and L-alanine to produce 8-amino-7-oxononanoate (AON), [acyl-carrier protein], and carbon dioxide. This chain is 8-amino-7-oxononanoate synthase, found in Alkalilimnicola ehrlichii (strain ATCC BAA-1101 / DSM 17681 / MLHE-1).